The primary structure comprises 249 residues: MAEAVVTVDGWSALHDTRQFDWTSWKLISKEERQAAIDEFQQLISKWEAVEEEKQGSHGIYKVVGNKADFMFIFLRESFQELEQIKTEINKTKLGDFLIPGYSYVSIIEKTMHDPMKAGEDRELSAYVKEALKPTMPKWEHACFYPMARRRDPGVNWFEIEKEERTKLLYEHGMTGRKYAGKVKEIITGSIGLDEWEWGVTLFAHDPLQFKKIVYEMRFDEVTTKYAEFGDFIVGNFLEKEELSNHLSI.

Tyrosine 145 is an active-site residue. Residues 145 to 149 (YPMAR) and histidine 172 each bind Fe-coproporphyrin III.

This sequence belongs to the ChdC family. Type 1 subfamily. Fe-coproporphyrin III is required as a cofactor.

The catalysed reaction is Fe-coproporphyrin III + 2 H2O2 + 2 H(+) = heme b + 2 CO2 + 4 H2O. The enzyme catalyses Fe-coproporphyrin III + H2O2 + H(+) = harderoheme III + CO2 + 2 H2O. It catalyses the reaction harderoheme III + H2O2 + H(+) = heme b + CO2 + 2 H2O. It functions in the pathway porphyrin-containing compound metabolism; protoheme biosynthesis. Involved in coproporphyrin-dependent heme b biosynthesis. Catalyzes the decarboxylation of Fe-coproporphyrin III (coproheme) to heme b (protoheme IX), the last step of the pathway. The reaction occurs in a stepwise manner with a three-propionate intermediate. The protein is Coproheme decarboxylase of Oceanobacillus iheyensis (strain DSM 14371 / CIP 107618 / JCM 11309 / KCTC 3954 / HTE831).